Here is a 505-residue protein sequence, read N- to C-terminus: Lysine--tRNA ligase (505 aa).

Mg(2+)-binding residues include Glu-415 and Glu-422.

The protein belongs to the class-II aminoacyl-tRNA synthetase family. As to quaternary structure, homodimer. It depends on Mg(2+) as a cofactor.

Its subcellular location is the cytoplasm. It catalyses the reaction tRNA(Lys) + L-lysine + ATP = L-lysyl-tRNA(Lys) + AMP + diphosphate. The polypeptide is Lysine--tRNA ligase (lysS) (Salmonella typhimurium (strain LT2 / SGSC1412 / ATCC 700720)).